A 287-amino-acid chain; its full sequence is U-megalopygitoxin(8)-Mo12 (287 aa).

A signal peptide spans 1-17 (MNLQYLILSLLSTTVYG). The residue at position 284 (histidine 284) is a Histidine amide.

Belongs to the megalysin family. Contains 2 disulfide bonds. In terms of tissue distribution, expressed by the venom apparatus.

The protein localises to the secreted. It localises to the target cell membrane. Functionally, may function as a large pore-forming protein. This chain is U-megalopygitoxin(8)-Mo12, found in Megalopyge opercularis (Southern flannel moth).